Here is a 283-residue protein sequence, read N- to C-terminus: Transcription factor bHLH104 (283 aa).

Residues 96–134 (VEINSGSSGGAVKEEQEHLDDDCSRKRARTGSCSRGGGT) are disordered. Residues 107-120 (VKEEQEHLDDDCSR) show a composition bias toward basic and acidic residues. Positions 130 to 181 (RGGGTKACRERLRREKLNERFMDLSSVLEPGRTPKTDKPAILDDAIRILNQL) constitute a bHLH domain.

As to quaternary structure, homodimer. Interacts with BTS and BHLH47/PYE.

The protein resides in the nucleus. The polypeptide is Transcription factor bHLH104 (BHLH104) (Arabidopsis thaliana (Mouse-ear cress)).